The chain runs to 1551 residues: UDP-glucose:glycoprotein glucosyltransferase 1 (1551 aa).

The first 42 residues, 1-42 (MCSRGDANTADAAAARRVTGLRYNMRLLIALALPCLFSLAEA), serve as a signal peptide directing secretion. Residues asparagine 269, asparagine 536, and asparagine 1228 are each glycosylated (N-linked (GlcNAc...) asparagine). The glucosyltransferase stretch occupies residues 1244-1551 (KAEEVKQDKD…QEGSQKHEEL (308 aa)). Serine 1277 bears the Phosphoserine mark. The segment at 1531 to 1551 (KELGTLHTEETQEGSQKHEEL) is disordered. Positions 1548–1551 (HEEL) match the Prevents secretion from ER motif.

It belongs to the glycosyltransferase 8 family. In terms of assembly, monomer as well as in a tight complex with SELENOF. Interacts with METTL23. Part of a large chaperone multiprotein complex comprising DNAJB11, HSP90B1, HSPA5, HYOU, PDIA2, PDIA4, PDIA6, PPIB, SDF2L1, UGGT1 and very small amounts of ERP29, but not, or at very low levels, CALR nor CANX. The cofactor is Ca(2+). Mn(2+) serves as cofactor.

It localises to the endoplasmic reticulum lumen. The protein resides in the endoplasmic reticulum-Golgi intermediate compartment. The catalysed reaction is N(4)-(alpha-D-Man-(1-&gt;2)-alpha-D-Man-(1-&gt;2)-alpha-D-Man-(1-&gt;3)-[alpha-D-Man-(1-&gt;2)-alpha-D-Man-(1-&gt;3)-[alpha-D-Man-(1-&gt;2)-alpha-D-Man-(1-&gt;6)]-alpha-D-Man-(1-&gt;6)]-beta-D-Man-(1-&gt;4)-beta-D-GlcNAc-(1-&gt;4)-beta-D-GlcNAc)-L-asparaginyl-[protein] (N-glucan mannose isomer 9A1,2,3B1,2,3) + UDP-alpha-D-glucose = N(4)-(alpha-D-Glc-(1-&gt;3)-alpha-D-Man-(1-&gt;2)-alpha-D-Man-(1-&gt;2)-alpha-D-Man-(1-&gt;3)-[alpha-D-Man-(1-&gt;2)-alpha-D-Man-(1-&gt;3)-[alpha-D-Man-(1-&gt;2)-alpha-D-Man-(1-&gt;6)]-alpha-D-Man-(1-&gt;6)]-beta-D-Man-(1-&gt;4)-beta-D-GlcNAc-(1-&gt;4)-beta-D-GlcNAc)-L-asparaginyl-[protein] + UDP + H(+). The protein operates within protein modification; protein glycosylation. In terms of biological role, recognizes glycoproteins with minor folding defects. Reglucosylates single N-glycans near the misfolded part of the protein, thus providing quality control for protein folding in the endoplasmic reticulum. Reglucosylated proteins are recognized by calreticulin for recycling to the endoplasmic reticulum and refolding or degradation. This chain is UDP-glucose:glycoprotein glucosyltransferase 1 (Uggt1), found in Mus musculus (Mouse).